A 292-amino-acid polypeptide reads, in one-letter code: uncharacterized protein (292 aa).

Positions 1-213 (MTTAITPDKK…DQDDDDQKDL (213 aa)) are disordered. 2 stretches are compositionally biased toward basic residues: residues 27 to 43 (TKPRRSSKTSKKRKSKK) and 50 to 78 (AKKRKTKRSKKSAKRTKRSAPKKAPKKAP). A compositionally biased stretch (polar residues) spans 90–100 (QQAQASLQKPI). Over residues 116–134 (PRPPTPIPPTGVKPEPAPR) the composition is skewed to pro residues. The segment covering 143-158 (SVSSTTPRTSATTGTT) has biased composition (low complexity).

This is an uncharacterized protein from Caenorhabditis elegans.